The chain runs to 1268 residues: Truncated polyprotein 1aTF (1268 aa).

A C4-type; atypical zinc finger spans residues 8 to 28; that stretch reads CMCTPAARVFWNAGQVFCTRC. Positions 69–180 constitute a Peptidase C31 domain; sequence ECTPSGCCWL…QPFCPFEEAH (112 aa). The segment at 69 to 182 is PCP1-alpha; the sequence is ECTPSGCCWL…FCPFEEAHSD (114 aa). Residues C76 and H146 each act as for Nsp1-alpha papain-like cysteine proteinase activity in the active site. Positions 269-384 are PCP1-beta; it reads PNVFDGKCWL…IFRFGAHKWY (116 aa). Residues 269–385 form the Peptidase C32 domain; the sequence is PNVFDGKCWL…FRFGAHKWYG (117 aa). Residues C276 and H345 each act as for Nsp1-beta papain-like cysteine proteinase activity in the active site. A Peptidase C33 domain is found at 420-527; that stretch reads TYSPPTDGSC…VGVCSEGCVA (108 aa). Active-site for Nsp2 cysteine proteinase activity residues include C429 and H498. Disordered regions lie at residues 728 to 758 and 1027 to 1064; these read AIGS…SHPA and SVTP…SHAS. The span at 737-749 shows a compositional bias: basic and acidic residues; the sequence is DSKRENMHNSRED. The next 4 membrane-spanning stretches (helical) occupy residues 1119–1139, 1153–1173, 1194–1214, and 1233–1253; these read LWLQ…CSVV, FLVL…LLLY, VMLS…AALW, and VISG…FLLF.

It localises to the host nucleus. Its subcellular location is the host cytoplasm. The protein resides in the host endoplasmic reticulum membrane. The protein localises to the membrane. In terms of biological role, is essential for viral subgenomic mRNA synthesis. Functionally, inhibits IFN-beta production. Counteracts the action of NF-kappaB by decreasing the phosphorylation of IkappaB-alpha, such that the degradation of IkappaB-alpha is suppressed. This leads to the blockage of NF-kappaB nuclear translocation and thus interference of NF-kappaB activation. Also seems to inhibit IRF3-dependent pathways. Nsp1-beta transactivates the programmed ribosomal frameshifting event leading to the expression of the 1aTF polyprotein. This is Truncated polyprotein 1aTF from Porcine reproductive and respiratory syndrome virus (isolate Pig/United States/SD 01-08/2001) (PRRSV).